The following is a 603-amino-acid chain: uncharacterized protein (603 aa).

Over residues 496 to 513 (EEEDQEEDDTSDDDDQEK) the composition is skewed to acidic residues. 2 disordered regions span residues 496-536 (EEED…GSLE) and 549-568 (AVAE…DTAQ). A compositionally biased stretch (polar residues) spans 517 to 533 (NPQNNIGSLTRTPSSPG).

The protein belongs to the herpesviridae US22 family.

This is an uncharacterized protein from Human cytomegalovirus (strain AD169) (HHV-5).